A 261-amino-acid polypeptide reads, in one-letter code: Thiazole synthase (261 aa).

Lys-95 functions as the Schiff-base intermediate with DXP in the catalytic mechanism. 1-deoxy-D-xylulose 5-phosphate-binding positions include Gly-156, 182–183 (AG), and 204–205 (NT).

It belongs to the ThiG family. As to quaternary structure, homotetramer. Forms heterodimers with either ThiH or ThiS.

The protein localises to the cytoplasm. It catalyses the reaction [ThiS sulfur-carrier protein]-C-terminal-Gly-aminoethanethioate + 2-iminoacetate + 1-deoxy-D-xylulose 5-phosphate = [ThiS sulfur-carrier protein]-C-terminal Gly-Gly + 2-[(2R,5Z)-2-carboxy-4-methylthiazol-5(2H)-ylidene]ethyl phosphate + 2 H2O + H(+). The protein operates within cofactor biosynthesis; thiamine diphosphate biosynthesis. Catalyzes the rearrangement of 1-deoxy-D-xylulose 5-phosphate (DXP) to produce the thiazole phosphate moiety of thiamine. Sulfur is provided by the thiocarboxylate moiety of the carrier protein ThiS. In vitro, sulfur can be provided by H(2)S. The sequence is that of Thiazole synthase from Pectobacterium carotovorum subsp. carotovorum (strain PC1).